We begin with the raw amino-acid sequence, 163 residues long: Nucleotide-binding protein YajQ (163 aa).

The protein belongs to the YajQ family.

In terms of biological role, nucleotide-binding protein. The sequence is that of Nucleotide-binding protein YajQ from Escherichia coli O81 (strain ED1a).